Here is a 430-residue protein sequence, read N- to C-terminus: Adenylosuccinate synthetase (430 aa).

GTP is bound by residues 12 to 18 and 40 to 42; these read GDEGKGK and GHT. The active-site Proton acceptor is Asp-13. 2 residues coordinate Mg(2+): Asp-13 and Gly-40. IMP-binding positions include 13–16, 38–41, Thr-130, Arg-144, Gln-224, and Thr-239; these read DEGK and NAGH. His-41 serves as the catalytic Proton donor. The segment at 277-298 is disordered; it reads PFPTEQDNETGRKIGERGREFG. Basic and acidic residues predominate over residues 285–296; the sequence is ETGRKIGERGRE. 299–305 contributes to the substrate binding site; the sequence is TNTGRPR. An IMP-binding site is contributed by Arg-303. Residues Arg-305, 331–333, and 413–415 each bind GTP; these read KLD and STS.

Belongs to the adenylosuccinate synthetase family. In terms of assembly, homodimer. Mg(2+) serves as cofactor.

The protein localises to the cytoplasm. The enzyme catalyses IMP + L-aspartate + GTP = N(6)-(1,2-dicarboxyethyl)-AMP + GDP + phosphate + 2 H(+). It participates in purine metabolism; AMP biosynthesis via de novo pathway; AMP from IMP: step 1/2. In terms of biological role, plays an important role in the de novo pathway of purine nucleotide biosynthesis. Catalyzes the first committed step in the biosynthesis of AMP from IMP. The polypeptide is Adenylosuccinate synthetase (Bradyrhizobium sp. (strain BTAi1 / ATCC BAA-1182)).